Here is a 259-residue protein sequence, read N- to C-terminus: MKLPNLTLSPRQILDDVALCLVFFTRLPLPDLDFRGRGLAAAIWAAPVAGLLVGLIGAIVFATAERFGLAMGPAAALALVATVIATGCLHEDGLSDVADGFGGGKSRGRKLDIMRDSRIGAYGAMALALSLLIRWNVLSELVDPTQALFALVAAHAASRGVLGAFMHLLPPARSDGLSAGAGAVSLETAIAGAVLGAIPLLLLGAGGAIAALILLGLLFAAFHALCLNQIGGQTGDTIGALQQVSEIAVLLVASVALSS.

Transmembrane regions (helical) follow at residues 41–61, 67–87, 119–139, 148–168, 179–199, 200–220, and 237–257; these read AAIW…AIVF, FGLA…IATG, IGAY…NVLS, LFAL…FMHL, AGAG…GAIP, LLLL…LLFA, and TIGA…SVAL.

This sequence belongs to the CobS family. Mg(2+) is required as a cofactor.

Its subcellular location is the cell inner membrane. It catalyses the reaction alpha-ribazole + adenosylcob(III)inamide-GDP = adenosylcob(III)alamin + GMP + H(+). It carries out the reaction alpha-ribazole 5'-phosphate + adenosylcob(III)inamide-GDP = adenosylcob(III)alamin 5'-phosphate + GMP + H(+). The protein operates within cofactor biosynthesis; adenosylcobalamin biosynthesis; adenosylcobalamin from cob(II)yrinate a,c-diamide: step 7/7. Functionally, joins adenosylcobinamide-GDP and alpha-ribazole to generate adenosylcobalamin (Ado-cobalamin). Also synthesizes adenosylcobalamin 5'-phosphate from adenosylcobinamide-GDP and alpha-ribazole 5'-phosphate. This is Adenosylcobinamide-GDP ribazoletransferase from Mesorhizobium japonicum (strain LMG 29417 / CECT 9101 / MAFF 303099) (Mesorhizobium loti (strain MAFF 303099)).